Reading from the N-terminus, the 87-residue chain is uncharacterized protein (87 aa).

An N-terminal signal peptide occupies residues 1–22 (MKIKTTVAALSVLSVLSFGAFA).

It belongs to the BhsA/McbA family.

The protein localises to the periplasm. This is an uncharacterized protein from Escherichia coli O6:H1 (strain CFT073 / ATCC 700928 / UPEC).